We begin with the raw amino-acid sequence, 396 residues long: Elongation factor Tu 1 (396 aa).

Residues 10–206 (KPHVNVGTIG…ALDTYIPTPE (197 aa)) enclose the tr-type G domain. The interval 19–26 (GHVDHGKT) is G1. 19–26 (GHVDHGKT) provides a ligand contact to GTP. Position 26 (T26) interacts with Mg(2+). The interval 60 to 64 (GITIN) is G2. Positions 81–84 (DCPG) are G3. Residues 81–85 (DCPGH) and 136–139 (NKAD) each bind GTP. A G4 region spans residues 136–139 (NKAD). The tract at residues 174 to 176 (SAK) is G5.

It belongs to the TRAFAC class translation factor GTPase superfamily. Classic translation factor GTPase family. EF-Tu/EF-1A subfamily. Monomer.

It localises to the cytoplasm. The enzyme catalyses GTP + H2O = GDP + phosphate + H(+). In terms of biological role, GTP hydrolase that promotes the GTP-dependent binding of aminoacyl-tRNA to the A-site of ribosomes during protein biosynthesis. The chain is Elongation factor Tu 1 from Methylobacillus flagellatus (strain ATCC 51484 / DSM 6875 / VKM B-1610 / KT).